A 136-amino-acid chain; its full sequence is Calmodulin-A (136 aa).

EF-hand domains are found at residues 1 to 36, 37 to 72, 74 to 109, and 110 to 136; these read EQIA…LGQN, PTEA…KMKD, DSEE…LGEK, and LTDE…EEFV. Ca(2+)-binding residues include Asp-14, Asp-16, Asp-18, Thr-20, Glu-25, Asp-50, Asp-52, Asn-54, Thr-56, Glu-61, Asp-87, Asp-89, Asn-91, Tyr-93, and Glu-98. Lys-109 carries the N6,N6,N6-trimethyllysine modification. Ca(2+) contacts are provided by Asp-123, Asp-125, Asp-127, Gln-129, and Glu-134.

Belongs to the calmodulin family.

Functionally, calmodulin acts as part of a calcium signal transduction pathway by mediating the control of a large number of enzymes, ion channels, aquaporins and other proteins through calcium-binding. Calcium-binding is required for the activation of calmodulin. Among the enzymes to be stimulated by the calmodulin-calcium complex are a number of protein kinases, such as myosin light-chain kinases and calmodulin-dependent protein kinase type II (CaMK2), and phosphatases. This Oryzias latipes (Japanese rice fish) protein is Calmodulin-A (calm1).